We begin with the raw amino-acid sequence, 508 residues long: Maturase K (508 aa).

Belongs to the intron maturase 2 family. MatK subfamily.

The protein localises to the plastid. It is found in the chloroplast. Functionally, usually encoded in the trnK tRNA gene intron. Probably assists in splicing its own and other chloroplast group II introns. In Abies bracteata (Bristle-cone fir), this protein is Maturase K.